Consider the following 282-residue polypeptide: Biotin synthase (282 aa).

One can recognise a Radical SAM core domain in the interval 1–230 (MSDNKIYLCA…NQMLMIAGGR (230 aa)). 3 residues coordinate [4Fe-4S] cluster: Cys-19, Cys-23, and Cys-26. Cys-63, Cys-98, and Cys-156 together coordinate [2Fe-2S] cluster.

The protein belongs to the radical SAM superfamily. Biotin synthase family. Homodimer. [4Fe-4S] cluster serves as cofactor. [2Fe-2S] cluster is required as a cofactor.

It catalyses the reaction (4R,5S)-dethiobiotin + (sulfur carrier)-SH + 2 reduced [2Fe-2S]-[ferredoxin] + 2 S-adenosyl-L-methionine = (sulfur carrier)-H + biotin + 2 5'-deoxyadenosine + 2 L-methionine + 2 oxidized [2Fe-2S]-[ferredoxin]. It functions in the pathway cofactor biosynthesis; biotin biosynthesis; biotin from 7,8-diaminononanoate: step 2/2. Its function is as follows. Catalyzes the conversion of dethiobiotin (DTB) to biotin by the insertion of a sulfur atom into dethiobiotin via a radical-based mechanism. The sequence is that of Biotin synthase from Aliarcobacter butzleri (strain RM4018) (Arcobacter butzleri).